The primary structure comprises 354 residues: Quinone-reactive Ni/Fe-hydrogenase small chain (354 aa).

A signal peptide (tat-type signal) is located at residues Met-1 to Ala-36. Residues Cys-53, Cys-56, Cys-153, Cys-186, His-224, Cys-227, Cys-252, and Cys-258 each contribute to the [4Fe-4S] cluster site. The [3Fe-4S] cluster site is built by Cys-267, Cys-286, and Cys-289.

Belongs to the [NiFe]/[NiFeSe] hydrogenase small subunit family. Heterodimer of a large and a small subunit. It depends on [4Fe-4S] cluster as a cofactor. [3Fe-4S] cluster serves as cofactor. In terms of processing, predicted to be exported by the Tat system. The position of the signal peptide cleavage has been experimentally proven.

It localises to the cell membrane. The catalysed reaction is H2 + a menaquinone = a menaquinol. In Wolinella succinogenes (strain ATCC 29543 / DSM 1740 / CCUG 13145 / JCM 31913 / LMG 7466 / NCTC 11488 / FDC 602W) (Vibrio succinogenes), this protein is Quinone-reactive Ni/Fe-hydrogenase small chain (hydA).